The primary structure comprises 439 residues: Chitinase-like protein Idgf1 (439 aa).

The N-terminal stretch at Met-1–Ala-20 is a signal peptide. The GH18 domain maps to Ser-22–Gly-439. A disulfide bond links Cys-26 and Cys-53. Residues Asn-122, Asn-218, and Asn-346 are each glycosylated (N-linked (GlcNAc...) asparagine). An intrachain disulfide couples Cys-340 to Cys-423.

The protein belongs to the glycosyl hydrolase 18 family. IDGF subfamily. As to expression, primarily expressed in yolk cells and fat body. In larvae, it is expressed in large salivary gland cells and weakly expressed in imaginal disks. Less expressed than Idgf2 and Idgf4.

The protein resides in the secreted. Cooperates with insulin-like peptides to stimulate the proliferation, polarization and motility of imaginal disk cells. May act by stabilizing the binding of insulin-like peptides to its receptor through a simultaneous interaction with both molecules to form a multiprotein signaling complex. This Drosophila melanogaster (Fruit fly) protein is Chitinase-like protein Idgf1 (Idgf1).